We begin with the raw amino-acid sequence, 516 residues long: GMP synthase [glutamine-hydrolyzing] (516 aa).

One can recognise a Glutamine amidotransferase type-1 domain in the interval 10–201; sequence KIIVLDFGSQ…AFDVCGAVAN (192 aa). C87 serves as the catalytic Nucleophile. Residues H175 and E177 contribute to the active site. Positions 202–391 constitute a GMPS ATP-PPase domain; the sequence is WTMADFIDMQ…LGIPHDLVWR (190 aa). Position 229-235 (229-235) interacts with ATP; sequence SGGVDSS.

In terms of assembly, homodimer.

The enzyme catalyses XMP + L-glutamine + ATP + H2O = GMP + L-glutamate + AMP + diphosphate + 2 H(+). It functions in the pathway purine metabolism; GMP biosynthesis; GMP from XMP (L-Gln route): step 1/1. Functionally, catalyzes the synthesis of GMP from XMP. In Lactobacillus acidophilus (strain ATCC 700396 / NCK56 / N2 / NCFM), this protein is GMP synthase [glutamine-hydrolyzing].